The primary structure comprises 186 residues: Mating-type-like protein ALPHA2 (186 aa).

The segment at residues 112 to 174 (KKIKSRRLTK…NRRRKEKNTK (63 aa)) is a DNA-binding region (homeobox; TALE-type).

It belongs to the TALE/M-ATYP homeobox family. Forms a heterodimer with A1.

It is found in the nucleus. Its function is as follows. Mating type proteins are sequence specific DNA-binding proteins that act as master switches in yeast differentiation by controlling gene expression in a cell type-specific fashion. Transcriptional corepressor that acts in conjunction with A1 to repress transcription both of homozygote-specific genes and of genes necessary for the white-opaque switch, a prerequisite for mating. The sequence is that of Mating-type-like protein ALPHA2 (MTLALPHA2) from Candida albicans (strain SC5314 / ATCC MYA-2876) (Yeast).